The sequence spans 558 residues: Phosphatidylserine lipase ABHD16A (558 aa).

Transmembrane regions (helical) follow at residues 60–80 and 93–113; these read ILAL…FAFF and VVPF…VACL. The Cytoplasmic segment spans residues 114-558; it reads RGIGRWTNPQ…AQNFQMPWHL (445 aa). In terms of domain architecture, AB hydrolase-1 spans 281-407; the sequence is LVICCEGNAG…LVTRTVRQHL (127 aa). Active-site charge relay system residues include Ser355, Asp430, and His507.

The protein belongs to the AB hydrolase superfamily. ABHD16 family.

Its subcellular location is the membrane. It carries out the reaction 1-heptadecanoyl-2-(5Z,8Z,11Z,14Z-eicosatetraenoyl)-sn-glycero-3-phosphoserine + H2O = 1-heptadecanoyl-sn-glycero-3-phosphoserine + (5Z,8Z,11Z,14Z)-eicosatetraenoate + H(+). The enzyme catalyses 1-hexadecanoyl-2-(9Z-octadecenoyl)-sn-glycero-3-phospho-L-serine + H2O = 1-hexadecanoyl-sn-glycero-3-phospho-L-serine + (9Z)-octadecenoate + H(+). It catalyses the reaction 1-octadecanoyl-2-(9Z,12Z-octadecadienoyl)-sn-glycero-3-phosphoserine + H2O = 1-octadecanoyl-sn-glycero-3-phosphoserine + (9Z,12Z)-octadecadienoate + H(+). The catalysed reaction is 1-heptadecanoyl-2-(5Z,8Z,11Z,14Z-eicosatetraenoyl)-sn-glycero-3-phosphocholine + H2O = 1-heptadecanoyl-sn-glycero-3-phosphocholine + (5Z,8Z,11Z,14Z)-eicosatetraenoate + H(+). It carries out the reaction 1-hexadecanoyl-2-(9Z-octadecenoyl)-sn-glycero-3-phosphoglycerol + H2O = 1-hexadecanoyl-sn-glycero-3-phosphoglycerol + (9Z)-octadecenoate + H(+). The enzyme catalyses 1-hexadecanoyl-2-(9Z-octadecenoyl)-sn-glycero-3-phospho-(1D-myo-inositol) + H2O = 1-hexadecanoyl-sn-glycero-3-phospho-(1D-myo-inositol) + (9Z)-octadecenoate + H(+). It catalyses the reaction 1-heptadecanoyl-2-(5Z,8Z,11Z,14Z-eicosatetraenoyl)-sn-glycero-3-phosphoethanolamine + H2O = 1-heptadecanoyl-sn-glycero-3-phosphoethanolamine + (5Z,8Z,11Z,14Z)-eicosatetraenoate + H(+). The catalysed reaction is 1-hexadecanoyl-2-(9Z-octadecenoyl)-sn-glycero-3-phospho-(1'-sn-glycerol) + H2O = 1-hexadecanoyl-sn-glycero-3-phospho-(1'-sn-glycerol) + (9Z)-octadecenoate + H(+). It carries out the reaction Hydrolyzes glycerol monoesters of long-chain fatty acids.. The enzyme catalyses 1-tetradecanoylglycerol + H2O = tetradecanoate + glycerol + H(+). It catalyses the reaction 2-hexadecanoylglycerol + H2O = glycerol + hexadecanoate + H(+). The catalysed reaction is 1-(9Z-octadecenoyl)-glycerol + H2O = glycerol + (9Z)-octadecenoate + H(+). It carries out the reaction 2-(9Z-octadecenoyl)-glycerol + H2O = glycerol + (9Z)-octadecenoate + H(+). The enzyme catalyses 2-(9Z,12Z-octadecadienoyl)-glycerol + H2O = (9Z,12Z)-octadecadienoate + glycerol + H(+). It catalyses the reaction 1-(5Z,8Z,11Z,14Z-eicosatetraenoyl)-glycerol + H2O = glycerol + (5Z,8Z,11Z,14Z)-eicosatetraenoate + H(+). The catalysed reaction is 2-(5Z,8Z,11Z,14Z-eicosatetraenoyl)-glycerol + H2O = glycerol + (5Z,8Z,11Z,14Z)-eicosatetraenoate + H(+). It carries out the reaction prostaglandin D2-1-glycerol ester + H2O = prostaglandin D2 + glycerol + H(+). The enzyme catalyses 2-glyceryl-15-deoxy-Delta(12,14)-prostaglandin J2 + H2O = 15-deoxy-Delta(12,14)-prostaglandin J2 + glycerol + H(+). It catalyses the reaction 1-(9Z,12Z-octadecadienoyl)-glycerol + H2O = (9Z,12Z)-octadecadienoate + glycerol + H(+). With respect to regulation, inhibited by beta-lactone-based lipid inhibitors, such as beta-lactone palmostatin-B. Its function is as follows. Phosphatidylserine (PS) lipase that mediates the hydrolysis of phosphatidylserine to generate lysophosphatidylserine (LPS). LPS constitutes a class of signaling lipids that regulates immunological and neurological processes. Has no activity towards diacylglycerol, triacylglycerol or lysophosphatidylserine lipase. Also has monoacylglycerol lipase activity, with preference for 1-(9Z,12Z-octadecadienoyl)-glycerol (1-LG) and 2-glyceryl-15-deoxy-Delta(12,14)-prostaglandin J2 (15d-PGJ(2)-G). In Homo sapiens (Human), this protein is Phosphatidylserine lipase ABHD16A.